Reading from the N-terminus, the 209-residue chain is Potassium-transporting ATPase KdpC subunit (209 aa).

A helical transmembrane segment spans residues 18–38; sequence ALALFVLLGLGLGYSLVATGI.

It belongs to the KdpC family. The system is composed of three essential subunits: KdpA, KdpB and KdpC.

It localises to the cell inner membrane. In terms of biological role, part of the high-affinity ATP-driven potassium transport (or Kdp) system, which catalyzes the hydrolysis of ATP coupled with the electrogenic transport of potassium into the cytoplasm. This subunit acts as a catalytic chaperone that increases the ATP-binding affinity of the ATP-hydrolyzing subunit KdpB by the formation of a transient KdpB/KdpC/ATP ternary complex. In Xanthomonas campestris pv. campestris (strain 8004), this protein is Potassium-transporting ATPase KdpC subunit.